The primary structure comprises 450 residues: Bifunctional protein GlmU (450 aa).

A pyrophosphorylase region spans residues 1-226 (MLAVAVLAAG…ADEVNGINNR (226 aa)). Residues 7–10 (LAAG), lysine 21, glutamine 73, and 78–79 (GT) contribute to the UDP-N-acetyl-alpha-D-glucosamine site. Aspartate 103 contributes to the Mg(2+) binding site. UDP-N-acetyl-alpha-D-glucosamine contacts are provided by glycine 140, glutamate 155, asparagine 170, and asparagine 224. Asparagine 224 is a Mg(2+) binding site. The segment at 227–247 (RQLAQCEALLQQRLRHHWMDE) is linker. The N-acetyltransferase stretch occupies residues 248–450 (GVTFIDPESC…TKEGWAERKV (203 aa)). UDP-N-acetyl-alpha-D-glucosamine-binding residues include arginine 329 and lysine 347. Catalysis depends on histidine 359, which acts as the Proton acceptor. UDP-N-acetyl-alpha-D-glucosamine-binding residues include tyrosine 362 and asparagine 373. Acetyl-CoA contacts are provided by residues alanine 376, 382–383 (NY), alanine 419, and arginine 436.

It in the N-terminal section; belongs to the N-acetylglucosamine-1-phosphate uridyltransferase family. In the C-terminal section; belongs to the transferase hexapeptide repeat family. As to quaternary structure, homotrimer. Mg(2+) is required as a cofactor.

The protein localises to the cytoplasm. It carries out the reaction alpha-D-glucosamine 1-phosphate + acetyl-CoA = N-acetyl-alpha-D-glucosamine 1-phosphate + CoA + H(+). The catalysed reaction is N-acetyl-alpha-D-glucosamine 1-phosphate + UTP + H(+) = UDP-N-acetyl-alpha-D-glucosamine + diphosphate. It participates in nucleotide-sugar biosynthesis; UDP-N-acetyl-alpha-D-glucosamine biosynthesis; N-acetyl-alpha-D-glucosamine 1-phosphate from alpha-D-glucosamine 6-phosphate (route II): step 2/2. It functions in the pathway nucleotide-sugar biosynthesis; UDP-N-acetyl-alpha-D-glucosamine biosynthesis; UDP-N-acetyl-alpha-D-glucosamine from N-acetyl-alpha-D-glucosamine 1-phosphate: step 1/1. The protein operates within bacterial outer membrane biogenesis; LPS lipid A biosynthesis. Its function is as follows. Catalyzes the last two sequential reactions in the de novo biosynthetic pathway for UDP-N-acetylglucosamine (UDP-GlcNAc). The C-terminal domain catalyzes the transfer of acetyl group from acetyl coenzyme A to glucosamine-1-phosphate (GlcN-1-P) to produce N-acetylglucosamine-1-phosphate (GlcNAc-1-P), which is converted into UDP-GlcNAc by the transfer of uridine 5-monophosphate (from uridine 5-triphosphate), a reaction catalyzed by the N-terminal domain. This chain is Bifunctional protein GlmU, found in Synechococcus sp. (strain CC9605).